Here is a 336-residue protein sequence, read N- to C-terminus: UPF0324 membrane protein lp_2841 (336 aa).

9 helical membrane-spanning segments follow: residues 5-22 (GILPGLVTSLVIAIISQG), 26-48 (FVPALGAATIAILLGIIGGNTFL), 84-106 (IGGFGVLFILCQMTITIVGALWL), 116-138 (VRMLMAGGNAVCGSSAIASIAPV), 150-172 (ITLVNLMGTVLMLTLPVLGMAVF), 204-226 (TVQFATIFKIMRIMMLVVVVLIF), 255-277 (WYVAGFLILCALNSLISLPAIIG), 282-304 (TISSWFEIIALAAIGLRLNLVNF), and 311-333 (LALYGLGVGTIQVVSALILITLL).

The protein belongs to the UPF0324 family.

The protein localises to the cell membrane. This chain is UPF0324 membrane protein lp_2841, found in Lactiplantibacillus plantarum (strain ATCC BAA-793 / NCIMB 8826 / WCFS1) (Lactobacillus plantarum).